The sequence spans 839 residues: Conserved oligomeric Golgi complex subunit 6 (839 aa).

Positions 14-38 (DTATPELPEPEPRLNLTSDAQSQPT) are disordered.

Belongs to the COG6 family. In terms of assembly, component of the conserved oligomeric Golgi (COG or Sec34/Sec35) complex which consists of eight different proteins COG1-COG8.

It localises to the golgi apparatus membrane. In terms of biological role, acts as a component of the peripheral membrane COG complex that is involved in intra-Golgi protein trafficking. COG is located at the cis-Golgi, and regulates tethering of retrograde intra-Golgi vesicles and possibly a number of other membrane trafficking events. The sequence is that of Conserved oligomeric Golgi complex subunit 6 (COG6) from Saccharomyces cerevisiae (strain ATCC 204508 / S288c) (Baker's yeast).